The following is a 134-amino-acid chain: Nif-regulating protein A (134 aa).

The C4-type; atypical zinc-finger motif lies at 3–36 (CLECGLVYIVSGLKVPEKISVRVFVNRIEHPFTH).

In terms of assembly, interacts with the general archaeal transcription factors TBPs.

Functionally, involved in nitrogen regulation. Enhances the transcription of the nitrogen fixation (nif) operon under nitrogen-limited conditions. Acts by binding to the nifH promoter region. The protein is Nif-regulating protein A of Methanosarcina mazei (strain ATCC BAA-159 / DSM 3647 / Goe1 / Go1 / JCM 11833 / OCM 88) (Methanosarcina frisia).